Here is a 226-residue protein sequence, read N- to C-terminus: Phosphatidylserine decarboxylase proenzyme (226 aa).

The Schiff-base intermediate with substrate; via pyruvic acid role is filled by S184. Pyruvic acid (Ser); by autocatalysis is present on S184.

This sequence belongs to the phosphatidylserine decarboxylase family. PSD-A subfamily. Heterodimer of a large membrane-associated beta subunit and a small pyruvoyl-containing alpha subunit. Pyruvate is required as a cofactor. Post-translationally, is synthesized initially as an inactive proenzyme. Formation of the active enzyme involves a self-maturation process in which the active site pyruvoyl group is generated from an internal serine residue via an autocatalytic post-translational modification. Two non-identical subunits are generated from the proenzyme in this reaction, and the pyruvate is formed at the N-terminus of the alpha chain, which is derived from the carboxyl end of the proenzyme. The post-translation cleavage follows an unusual pathway, termed non-hydrolytic serinolysis, in which the side chain hydroxyl group of the serine supplies its oxygen atom to form the C-terminus of the beta chain, while the remainder of the serine residue undergoes an oxidative deamination to produce ammonia and the pyruvoyl prosthetic group on the alpha chain.

Its subcellular location is the cell membrane. It catalyses the reaction a 1,2-diacyl-sn-glycero-3-phospho-L-serine + H(+) = a 1,2-diacyl-sn-glycero-3-phosphoethanolamine + CO2. It participates in phospholipid metabolism; phosphatidylethanolamine biosynthesis; phosphatidylethanolamine from CDP-diacylglycerol: step 2/2. Its function is as follows. Catalyzes the formation of phosphatidylethanolamine (PtdEtn) from phosphatidylserine (PtdSer). In Ehrlichia chaffeensis (strain ATCC CRL-10679 / Arkansas), this protein is Phosphatidylserine decarboxylase proenzyme.